The primary structure comprises 43 residues: Defensin, isoforms B and C (43 aa).

3 disulfide bridges follow: cysteine 3–cysteine 34, cysteine 20–cysteine 40, and cysteine 24–cysteine 42.

The protein belongs to the invertebrate defensin family. Type 1 subfamily.

It localises to the secreted. Its function is as follows. Involved in anti Gram-positive activity of immune hemolymph of Z.atratus. This chain is Defensin, isoforms B and C, found in Zophobas atratus (Giant mealworm beetle).